Here is a 100-residue protein sequence, read N- to C-terminus: Integration host factor subunit beta (100 aa).

Belongs to the bacterial histone-like protein family. In terms of assembly, heterodimer of an alpha and a beta chain.

Functionally, this protein is one of the two subunits of integration host factor, a specific DNA-binding protein that functions in genetic recombination as well as in transcriptional and translational control. The chain is Integration host factor subunit beta from Agrobacterium fabrum (strain C58 / ATCC 33970) (Agrobacterium tumefaciens (strain C58)).